A 126-amino-acid polypeptide reads, in one-letter code: Urease subunit beta (126 aa).

It belongs to the urease beta subunit family. In terms of assembly, heterotrimer of UreA (gamma), UreB (beta) and UreC (alpha) subunits. Three heterotrimers associate to form the active enzyme.

Its subcellular location is the cytoplasm. It catalyses the reaction urea + 2 H2O + H(+) = hydrogencarbonate + 2 NH4(+). It participates in nitrogen metabolism; urea degradation; CO(2) and NH(3) from urea (urease route): step 1/1. This is Urease subunit beta from Frankia casuarinae (strain DSM 45818 / CECT 9043 / HFP020203 / CcI3).